Here is a 430-residue protein sequence, read N- to C-terminus: Adenylosuccinate synthetase (430 aa).

GTP is bound by residues 12–18 (GDEGKGK) and 40–42 (GHT). Asp-13 serves as the catalytic Proton acceptor. Positions 13 and 40 each coordinate Mg(2+). Residues 13–16 (DEGK), 38–41 (NAGH), Thr-128, Arg-142, Gln-223, Thr-238, and Arg-302 contribute to the IMP site. Catalysis depends on His-41, which acts as the Proton donor. Residue 298-304 (TTTGRPR) participates in substrate binding. Residues Arg-304, 330–332 (SID), and 412–414 (SVG) contribute to the GTP site.

Belongs to the adenylosuccinate synthetase family. As to quaternary structure, homodimer. Requires Mg(2+) as cofactor.

The protein resides in the cytoplasm. It carries out the reaction IMP + L-aspartate + GTP = N(6)-(1,2-dicarboxyethyl)-AMP + GDP + phosphate + 2 H(+). The protein operates within purine metabolism; AMP biosynthesis via de novo pathway; AMP from IMP: step 1/2. Plays an important role in the de novo pathway of purine nucleotide biosynthesis. Catalyzes the first committed step in the biosynthesis of AMP from IMP. This is Adenylosuccinate synthetase from Streptococcus agalactiae serotype III (strain NEM316).